The primary structure comprises 604 residues: Putative sodium-dependent multivitamin transporter (604 aa).

A run of 6 helical transmembrane segments spans residues 4 to 24, 48 to 68, 78 to 98, 134 to 154, 160 to 180, and 188 to 208; these read LGAW…AIGI, VAPV…ILGV, MFVV…YLII, VLYM…VTGL, IVIV…KAVL, and LLMF…AGSL. N-linked (GlcNAc...) asparagine glycosylation is found at asparagine 222 and asparagine 225. The next 7 helical transmembrane spans lie at 234 to 254, 273 to 293, 331 to 351, 389 to 409, 413 to 433, 440 to 460, and 511 to 531; these read HTWF…YGVN, ALWW…FSGL, LAGL…SSII, LFFG…GGLL, LSIF…GMYV, GAIG…FGQP, and ALGF…FALL.

The protein belongs to the sodium:solute symporter (SSF) (TC 2.A.21) family.

The protein localises to the cell membrane. In Drosophila melanogaster (Fruit fly), this protein is Putative sodium-dependent multivitamin transporter.